The sequence spans 213 residues: Sclerostin (213 aa).

Residues 1 to 23 (MQLPLALCLVCLLVHTAFRVVEG) form the signal peptide. A disordered region spans residues 41–71 (GEYPEPPPELENNKTMNRAENGGRPPHHPFE). The N-linked (GlcNAc...) asparagine glycan is linked to Asn53. 4 cysteine pairs are disulfide-bonded: Cys80–Cys134, Cys94–Cys148, Cys105–Cys165, and Cys109–Cys167. One can recognise a CTCK domain in the interval 82-172 (ELHFTRYVTD…ASCKCKRLTR (91 aa)). N-linked (GlcNAc...) asparagine glycosylation occurs at Asn175. The segment at 178 to 213 (ELKDFGTEAARPQKGRKPRPRARSAKANQAELENAY) is disordered. A compositionally biased stretch (basic residues) spans 190 to 201 (QKGRKPRPRARS).

The protein belongs to the sclerostin family. In terms of assembly, interacts with LRP4 (via the extracellular domain); the interaction facilitates the inhibition of Wnt signaling. Interacts with LRP5 (via the first two YWTD-EGF repeat domains); the interaction inhibits Wnt-mediated signaling. Interacts with LRP6. As to expression, widely expressed at low levels with highest levels in bone, cartilage, kidney, liver, bone marrow and primary osteoblasts differentiated for 21 days. Detected in the subendothelial layer of the aortic intima (at protein level).

The protein resides in the secreted. It is found in the extracellular space. The protein localises to the extracellular matrix. In terms of biological role, negative regulator of bone growth that acts through inhibition of Wnt signaling and bone formation. This Homo sapiens (Human) protein is Sclerostin.